Here is a 177-residue protein sequence, read N- to C-terminus: Large ribosomal subunit protein uL6 (177 aa).

The interval 151–177 (KRPPEPYKGKGVKYADEHIRRKEGKKS) is disordered. The segment covering 152–177 (RPPEPYKGKGVKYADEHIRRKEGKKS) has biased composition (basic and acidic residues).

It belongs to the universal ribosomal protein uL6 family. Part of the 50S ribosomal subunit.

In terms of biological role, this protein binds to the 23S rRNA, and is important in its secondary structure. It is located near the subunit interface in the base of the L7/L12 stalk, and near the tRNA binding site of the peptidyltransferase center. In Fusobacterium nucleatum subsp. nucleatum (strain ATCC 25586 / DSM 15643 / BCRC 10681 / CIP 101130 / JCM 8532 / KCTC 2640 / LMG 13131 / VPI 4355), this protein is Large ribosomal subunit protein uL6.